A 67-amino-acid chain; its full sequence is Large ribosomal subunit protein bL31 (67 aa).

This sequence belongs to the bacterial ribosomal protein bL31 family. Type A subfamily. As to quaternary structure, part of the 50S ribosomal subunit.

Binds the 23S rRNA. The polypeptide is Large ribosomal subunit protein bL31 (Finegoldia magna (strain ATCC 29328 / DSM 20472 / WAL 2508) (Peptostreptococcus magnus)).